The chain runs to 384 residues: S-adenosylmethionine synthase (384 aa).

Residue H15 coordinates ATP. Position 17 (D17) interacts with Mg(2+). E43 provides a ligand contact to K(+). Residues E56 and Q99 each contribute to the L-methionine site. A flexible loop region spans residues 99–109; that stretch reads QSPDINQGVDR. Residues 164–166, 230–231, D239, 245–246, A262, and K266 each bind ATP; these read DAK, RF, and RK. Residue D239 coordinates L-methionine. K270 provides a ligand contact to L-methionine.

The protein belongs to the AdoMet synthase family. Homotetramer; dimer of dimers. Mg(2+) is required as a cofactor. Requires K(+) as cofactor.

The protein resides in the cytoplasm. It catalyses the reaction L-methionine + ATP + H2O = S-adenosyl-L-methionine + phosphate + diphosphate. The protein operates within amino-acid biosynthesis; S-adenosyl-L-methionine biosynthesis; S-adenosyl-L-methionine from L-methionine: step 1/1. In terms of biological role, catalyzes the formation of S-adenosylmethionine (AdoMet) from methionine and ATP. The overall synthetic reaction is composed of two sequential steps, AdoMet formation and the subsequent tripolyphosphate hydrolysis which occurs prior to release of AdoMet from the enzyme. In Enterobacter sp. (strain 638), this protein is S-adenosylmethionine synthase.